Here is a 263-residue protein sequence, read N- to C-terminus: Putative inactive caspase B (263 aa).

Residues 1–8 (MMCEDASD) constitute a propeptide, removed in mature form by cps-1 or ced-3.

Belongs to the peptidase C14A family. Interacts with ced-3 (via large subunit p17 or small subunit p13); the interaction inhibits ced-3 autoactivation. In terms of processing, cleavage by csp-1 isoform b or ced-3 removes the propeptide and generates subunit p31 in vitro. An additional cleavage at Asp-149 generates the 2 subunits p17 and p14 but this cleavage appears to be less efficient. In terms of tissue distribution, specifically expressed in the hermaphrodite germline.

It localises to the cytoplasm. Functionally, putative inactive caspase. In the germline, binds caspase ced-3 zymogen and prevents ced-3 autoactivation. Does not affect the caspase activity of mature ced-3 and ced-4-mediated mature ced-3 activation. Negatively regulates germline apoptosis by inhibiting autocleavage of caspase ced-3. Involved in fertility. In terms of biological role, putative inactive caspase. Dispensable for the inhibition of germline apoptosis. The polypeptide is Putative inactive caspase B (Caenorhabditis elegans).